Here is a 561-residue protein sequence, read N- to C-terminus: NAD(P)H-quinone oxidoreductase chain 4 2 (561 aa).

Helical transmembrane passes span 6-26 (FPWLTTIVLLPLLAALLIPFI), 36-56 (WYGLGVGAIDFALMCYVFWKY), 87-107 (LSMPLVLLAGLVTTLSIFAAW), 115-135 (LFYFLMLVLYSAQIGVFVAQD), 136-156 (LMLLFIMWELELVPVYLLISI), 169-189 (FLLYTAAASIFILVAALGMAL), 210-230 (AFELLLYLGLLITFGVKLAVF), 244-264 (SAPVSMILAGVLLKMGGYGLI), 275-295 (HVYFAPVLAILGVVNIVYGGL), 312-332 (VAHMGFVLLGIASFTDLGISG), 333-353 (ALLQMISHGLIAAVLFFLAGV), 376-396 (IFALFTISAMASLALPGMSGF), 419-439 (VTVFLAAVGLILTPIYLLSML), and 490-510 (VAIAACFLVLIIGIGLYPKIA).

This sequence belongs to the complex I subunit 4 family.

The protein resides in the cellular thylakoid membrane. It carries out the reaction a plastoquinone + NADH + (n+1) H(+)(in) = a plastoquinol + NAD(+) + n H(+)(out). The catalysed reaction is a plastoquinone + NADPH + (n+1) H(+)(in) = a plastoquinol + NADP(+) + n H(+)(out). In terms of biological role, NDH-1 shuttles electrons from NAD(P)H, via FMN and iron-sulfur (Fe-S) centers, to quinones in the respiratory chain. The immediate electron acceptor for the enzyme in this species is believed to be plastoquinone. Couples the redox reaction to proton translocation (for every two electrons transferred, four hydrogen ions are translocated across the cytoplasmic membrane), and thus conserves the redox energy in a proton gradient. This Trichodesmium erythraeum (strain IMS101) protein is NAD(P)H-quinone oxidoreductase chain 4 2.